The primary structure comprises 254 residues: Acetyl-coenzyme A carboxylase carboxyl transferase subunit beta (254 aa).

In terms of domain architecture, CoA carboxyltransferase N-terminal spans 1–254 (MWLRCPHCHQ…LLKTGSVANE (254 aa)). Positions 5, 8, 23, and 26 each coordinate Zn(2+). The segment at 5–26 (CPHCHQLLFAKQLTQYAVCPNC) adopts a C4-type zinc-finger fold.

The protein belongs to the AccD/PCCB family. Acetyl-CoA carboxylase is a heterohexamer composed of biotin carboxyl carrier protein (AccB), biotin carboxylase (AccC) and two subunits each of ACCase subunit alpha (AccA) and ACCase subunit beta (AccD). It depends on Zn(2+) as a cofactor.

It is found in the cytoplasm. It catalyses the reaction N(6)-carboxybiotinyl-L-lysyl-[protein] + acetyl-CoA = N(6)-biotinyl-L-lysyl-[protein] + malonyl-CoA. It participates in lipid metabolism; malonyl-CoA biosynthesis; malonyl-CoA from acetyl-CoA: step 1/1. Functionally, component of the acetyl coenzyme A carboxylase (ACC) complex. Biotin carboxylase (BC) catalyzes the carboxylation of biotin on its carrier protein (BCCP) and then the CO(2) group is transferred by the transcarboxylase to acetyl-CoA to form malonyl-CoA. The chain is Acetyl-coenzyme A carboxylase carboxyl transferase subunit beta from Limosilactobacillus reuteri (strain DSM 20016) (Lactobacillus reuteri).